The primary structure comprises 218 residues: Outer-membrane lipoprotein LolB (218 aa).

The signal sequence occupies residues 1–20; it reads MSQVIRTLALTGLALAGLSG. The N-palmitoyl cysteine moiety is linked to residue cysteine 21. Cysteine 21 carries S-diacylglycerol cysteine lipidation.

This sequence belongs to the LolB family. As to quaternary structure, monomer.

The protein resides in the cell outer membrane. In terms of biological role, plays a critical role in the incorporation of lipoproteins in the outer membrane after they are released by the LolA protein. The polypeptide is Outer-membrane lipoprotein LolB (Xanthomonas campestris pv. campestris (strain B100)).